The primary structure comprises 266 residues: Chymotrypsin-like elastase family member 1 (266 aa).

A signal peptide spans 1 to 16 (MLRLLVFTSLVLYGHS). Residues 17–26 (TQDFPETNAR) constitute a propeptide, activation peptide. One can recognise a Peptidase S1 domain in the interval 27–264 (VVGGTAVSKN…YISWINNAIA (238 aa)). Cys-56 and Cys-72 are disulfide-bonded. His-71 serves as the catalytic Charge relay system. Asp-85, Asn-87, Gln-90, and Glu-95 together coordinate Ca(2+). A glycan (N-linked (GlcNAc...) asparagine) is linked at Asn-87. The Charge relay system role is filled by Asp-119. Disulfide bonds link Cys-153–Cys-220, Cys-184–Cys-200, and Cys-210–Cys-240. Catalysis depends on Ser-214, which acts as the Charge relay system. The N-linked (GlcNAc...) asparagine glycan is linked to Asn-241.

It belongs to the peptidase S1 family. Elastase subfamily. Ca(2+) serves as cofactor. As to expression, pancreas.

It localises to the secreted. It carries out the reaction Hydrolysis of proteins, including elastin. Preferential cleavage: Ala-|-Xaa.. In terms of biological role, serine proteases that hydrolyze many proteins in addition to elastin. The protein is Chymotrypsin-like elastase family member 1 (CELA1) of Bos taurus (Bovine).